A 571-amino-acid polypeptide reads, in one-letter code: Sulfite reductase [NADPH] hemoprotein beta-component (571 aa).

Residues Cys435, Cys441, Cys480, and Cys484 each contribute to the [4Fe-4S] cluster site. Siroheme is bound at residue Cys484.

The protein belongs to the nitrite and sulfite reductase 4Fe-4S domain family. Alpha(8)-beta(8). The alpha component is a flavoprotein, the beta component is a hemoprotein. Requires siroheme as cofactor. It depends on [4Fe-4S] cluster as a cofactor.

It carries out the reaction hydrogen sulfide + 3 NADP(+) + 3 H2O = sulfite + 3 NADPH + 4 H(+). It functions in the pathway sulfur metabolism; hydrogen sulfide biosynthesis; hydrogen sulfide from sulfite (NADPH route): step 1/1. Component of the sulfite reductase complex that catalyzes the 6-electron reduction of sulfite to sulfide. This is one of several activities required for the biosynthesis of L-cysteine from sulfate. The polypeptide is Sulfite reductase [NADPH] hemoprotein beta-component (Erwinia tasmaniensis (strain DSM 17950 / CFBP 7177 / CIP 109463 / NCPPB 4357 / Et1/99)).